Consider the following 93-residue polypeptide: DNA-directed RNA polymerase subunit omega (93 aa).

Belongs to the RNA polymerase subunit omega family. The RNAP catalytic core consists of 2 alpha, 1 beta, 1 beta' and 1 omega subunit. When a sigma factor is associated with the core the holoenzyme is formed, which can initiate transcription.

It catalyses the reaction RNA(n) + a ribonucleoside 5'-triphosphate = RNA(n+1) + diphosphate. In terms of biological role, promotes RNA polymerase assembly. Latches the N- and C-terminal regions of the beta' subunit thereby facilitating its interaction with the beta and alpha subunits. This is DNA-directed RNA polymerase subunit omega from Glaesserella parasuis serovar 5 (strain SH0165) (Haemophilus parasuis).